A 118-amino-acid chain; its full sequence is Large ribosomal subunit protein uL18 (118 aa).

It belongs to the universal ribosomal protein uL18 family. As to quaternary structure, part of the 50S ribosomal subunit; part of the 5S rRNA/L5/L18/L25 subcomplex. Contacts the 5S and 23S rRNAs.

Functionally, this is one of the proteins that bind and probably mediate the attachment of the 5S RNA into the large ribosomal subunit, where it forms part of the central protuberance. The polypeptide is Large ribosomal subunit protein uL18 (Nitrosospira multiformis (strain ATCC 25196 / NCIMB 11849 / C 71)).